The primary structure comprises 188 residues: SAYSvFN domain-containing protein 1 (188 aa).

Residues 1 to 10 show a composition bias toward basic and acidic residues; the sequence is MEQRLAEFRE. Disordered stretches follow at residues 1 to 43 and 60 to 80; these read MEQR…ATPK and AIAQAQPNQPQEAGQQLPEST. Residues 1 to 100 are Cytoplasmic-facing; it reads MEQRLAEFRE…SFLTNITFLK (100 aa). 2 stretches are compositionally biased toward low complexity: residues 22–43 and 60–75; these read STSSQSVQTSGAKAEPAAATPK and AIAQAQPNQPQEAGQQ. The tract at residues 86 to 100 is middle helical (MH); it reads SSCRQSFLTNITFLK. An intramembrane region (helical) is located at residues 101-121; that stretch reads VLLWLVLLGLFVELEFGLAYF. Topologically, residues 122–188 are cytoplasmic; the sequence is VLSMFYWMYV…RTSPSCSSYP (67 aa).

The protein belongs to the SAYSD1 family. As to quaternary structure, associates (via N-terminus) with ribosomes. In terms of tissue distribution, enriched in testis; predominantly expressed in round and elongating spermatids.

The protein localises to the endoplasmic reticulum membrane. Its subcellular location is the cytoplasmic vesicle membrane. In terms of biological role, ufmylation 'reader' component of a translocation-associated quality control pathway, a mechanism that takes place when a ribosome has stalled during translation, and which is required to degrade clogged substrates. Specifically recognizes and binds ufmylated ribosomes when a ribosome has stalled, promoting the transport of stalled nascent chain via the TRAPP complex to lysosomes for degradation. This is SAYSvFN domain-containing protein 1 from Mus musculus (Mouse).